A 520-amino-acid polypeptide reads, in one-letter code: Diacylglycerol O-acyltransferase 1 (520 aa).

Disordered stretches follow at residues 28-57 (RRKS…GAPA) and 72-116 (QGTA…AHRR). Residues 34 to 54 (DSSNGLLLSGSDNNSPSDDVG) are compositionally biased toward low complexity. Residues 81-98 (NNGGGDNNGGGRGGGEGR) are compositionally biased toward gly residues. 7 helical membrane-spanning segments follow: residues 126 to 146 (AIFK…LIAV), 176 to 196 (WPLF…FTVE), 207 to 227 (PVVI…PVYV), 233 to 253 (SAFL…LKLV), 276 to 296 (VSYY…TLCY), 317 to 337 (KLVI…NPIV), and 365 to 385 (VWLC…AELL). Positions 392-398 (FYKDWWN) match the FYXDWWN motif motif. The next 3 helical transmembrane spans lie at 434–454 (LAII…IAVP), 457–477 (LFKL…FITN), and 487–507 (VGNM…CVLL). His-447 is an active-site residue.

The protein belongs to the membrane-bound acyltransferase family. Sterol o-acyltransferase subfamily. Interacts with LPCAT2 and LPAT2. In terms of tissue distribution, ubiquitous. Highest expression in young developing seeds.

It is found in the plastid. The protein resides in the chloroplast membrane. It localises to the endoplasmic reticulum membrane. The catalysed reaction is an acyl-CoA + a 1,2-diacyl-sn-glycerol = a triacyl-sn-glycerol + CoA. It carries out the reaction 1,2-di-(9Z-octadecenoyl)-sn-glycerol + (9Z)-octadecenoyl-CoA = 1,2,3-tri-(9Z-octadecenoyl)-glycerol + CoA. It participates in glycerolipid metabolism; triacylglycerol biosynthesis. Its activity is regulated as follows. Partially inhibited by niacin. Functionally, major contributor to triacylglycerol (TAG) synthesis and oil accumulation in seeds. Catalyzes the acylation of the sn-3 hydroxy group of sn-1,2-diacylglycerol using acyl-CoA. Can use palmitoyl-CoA and oleoyl-CoA as substrates. Can use oleoyl-CoA and linoleoyl-CoA as substrates. Has substrate preference for oleoyl-CoA compared to linoleoyl-CoA. Has complementary functions with PDAT1 that are essential for triacylglycerol synthesis and normal development of both seeds and pollen. The protein is Diacylglycerol O-acyltransferase 1 of Arabidopsis thaliana (Mouse-ear cress).